Reading from the N-terminus, the 518-residue chain is Pre-glycoprotein polyprotein GP complex (518 aa).

Residue G2 is the site of N-myristoyl glycine; by host attachment. Topologically, residues 2–17 (GQVIGFFQSLPNIINE) are extracellular. A helical transmembrane segment spans residues 18–33 (ALNIALICVALIAILK). Over 34-58 (GIVNIWKSGLIQLFIFLILAGRSCS) the chain is Cytoplasmic. C57 contributes to the Zn(2+) binding site. Topologically, residues 59 to 456 (HTFQIGRNHE…QGSTPLSLVD (398 aa)) are extracellular. 4 cysteine pairs are disulfide-bonded: C87–C258, C303–C316, C325–C334, and C388–C409. N-linked (GlcNAc...) asparagine; by host glycosylation is found at N90, N112, N127, N180, and N251. N-linked (GlcNAc...) asparagine; by host glycosylation is found at N389, N397, N414, and N419. A helical membrane pass occupies residues 457–477 (LCFWSTLFYVTTLFAHLVGFP). Topologically, residues 478–518 (THRHILDGPCPKPHRLTKKGICSCGHFGIPGKPVRWVKRSR) are cytoplasmic. Zn(2+) is bound by residues H479, H481, C487, H491, C499, and C501.

The protein belongs to the arenaviridae GPC protein family. Interacts with glycoprotein G2. Part of the GP complex (GP-C) together with glycoprotein G1 and glycoprotein G2. The GP-complex interacts with protein Z, which interacts with ribonucleocapsid; these interactions may induce virion budding. In terms of assembly, homotrimer; disulfide-linked. In pre-fusion state, G1 homotrimers bind G2 homotrimers via ionic interactions. Part of the GP complex (GP-C) together with glycoprotein G2 and the stable signal peptide. The GP-complex interacts with protein Z, which interacts with ribonucleocapsid; these interactions may induce virion budding. As to quaternary structure, homotrimer. Interacts with the stable signal peptide. In pre-fusion state, G2 homotrimers bind G1 homotrimers via ionic interactions. Part of the GP complex (GP-C) together with glycoprotein G1 and the stable signal peptide. Acidification in the endosome triggers rearrangements, which ultimately leads to a 6 helix bundle formed by the two heptad repeat domains (HR1 and HR2) in post-fusion state. The GP-complex interacts with protein Z, which interacts with ribonucleocapsid; these interactions may induce virion budding. Post-translationally, specific enzymatic cleavages in vivo yield mature proteins. GP-C polyprotein is cleaved in the endoplasmic reticulum by the host protease MBTPS1. Only cleaved glycoprotein is incorporated into virions. In terms of processing, the SSP remains stably associated with the GP complex following cleavage by signal peptidase and plays crucial roles in the trafficking of GP through the secretory pathway. Myristoylation is necessary for GP2-mediated fusion activity.

It localises to the virion membrane. Its subcellular location is the host endoplasmic reticulum membrane. The protein resides in the host Golgi apparatus membrane. It is found in the host cell membrane. In terms of biological role, functions as a cleaved signal peptide that is retained as the third component of the GP complex (GP-C). Helps to stabilize the spike complex in its native conformation. The SSP is required for efficient glycoprotein expression, post-translational maturation cleavage of G1 and G2, glycoprotein transport to the cell surface plasma membrane, formation of infectious virus particles, and acid pH-dependent glycoprotein-mediated cell fusion. Forms the virion spikes together with glycoprotein G2. The glycoprotein spike trimers are connected to the underlying matrix. Mediates virus attachment to host receptor alpha-dystroglycan DAG1. This attachment induces virion internalization predominantly through clathrin- and caveolin-independent endocytosis. Functionally, forms the virion spikes together with glycoprotein G1. The glycoprotein spike trimers are connected to the underlying matrix. Class I viral fusion protein that directs fusion of viral and host endosomal membranes, leading to delivery of the nucleocapsid into the cytoplasm. Membrane fusion is mediated by irreversible conformational changes induced by acidification. The protein is Pre-glycoprotein polyprotein GP complex of Bolomys (OLVV).